The following is a 234-amino-acid chain: Large ribosomal subunit protein uL1 (234 aa).

Belongs to the universal ribosomal protein uL1 family. In terms of assembly, part of the 50S ribosomal subunit.

Functionally, binds directly to 23S rRNA. The L1 stalk is quite mobile in the ribosome, and is involved in E site tRNA release. In terms of biological role, protein L1 is also a translational repressor protein, it controls the translation of the L11 operon by binding to its mRNA. The chain is Large ribosomal subunit protein uL1 from Sodalis glossinidius (strain morsitans).